Reading from the N-terminus, the 165-residue chain is Small ribosomal subunit protein uS5 (165 aa).

The S5 DRBM domain maps to 13–76; it reads LEEKVLVVNR…EAARKNLITI (64 aa).

This sequence belongs to the universal ribosomal protein uS5 family. In terms of assembly, part of the 30S ribosomal subunit. Contacts proteins S4 and S8.

Functionally, with S4 and S12 plays an important role in translational accuracy. In terms of biological role, located at the back of the 30S subunit body where it stabilizes the conformation of the head with respect to the body. The chain is Small ribosomal subunit protein uS5 from Chlamydia caviae (strain ATCC VR-813 / DSM 19441 / 03DC25 / GPIC) (Chlamydophila caviae).